Consider the following 292-residue polypeptide: Ribosomal RNA small subunit methyltransferase A (292 aa).

Asn29, Leu31, Gly56, Glu77, Asp102, and Asn127 together coordinate S-adenosyl-L-methionine.

It belongs to the class I-like SAM-binding methyltransferase superfamily. rRNA adenine N(6)-methyltransferase family. RsmA subfamily.

It localises to the cytoplasm. The enzyme catalyses adenosine(1518)/adenosine(1519) in 16S rRNA + 4 S-adenosyl-L-methionine = N(6)-dimethyladenosine(1518)/N(6)-dimethyladenosine(1519) in 16S rRNA + 4 S-adenosyl-L-homocysteine + 4 H(+). Specifically dimethylates two adjacent adenosines (A1518 and A1519) in the loop of a conserved hairpin near the 3'-end of 16S rRNA in the 30S particle. May play a critical role in biogenesis of 30S subunits. The protein is Ribosomal RNA small subunit methyltransferase A of Bacillus pumilus (strain SAFR-032).